The sequence spans 503 residues: ATP synthase subunit beta (503 aa).

157–164 (GGAGVGKT) provides a ligand contact to ATP.

The protein belongs to the ATPase alpha/beta chains family. F-type ATPases have 2 components, CF(1) - the catalytic core - and CF(0) - the membrane proton channel. CF(1) has five subunits: alpha(3), beta(3), gamma(1), delta(1), epsilon(1). CF(0) has three main subunits: a(1), b(2) and c(9-12). The alpha and beta chains form an alternating ring which encloses part of the gamma chain. CF(1) is attached to CF(0) by a central stalk formed by the gamma and epsilon chains, while a peripheral stalk is formed by the delta and b chains.

It localises to the cell membrane. The catalysed reaction is ATP + H2O + 4 H(+)(in) = ADP + phosphate + 5 H(+)(out). In terms of biological role, produces ATP from ADP in the presence of a proton gradient across the membrane. The catalytic sites are hosted primarily by the beta subunits. The polypeptide is ATP synthase subunit beta (Christiangramia forsetii (strain DSM 17595 / CGMCC 1.15422 / KT0803) (Gramella forsetii)).